Consider the following 258-residue polypeptide: MEEMKKTAIRLPKGKQKPIKTEWNSRCVLFTYFQGDISSVVDEHFSRALSNIKSPQELTPSSQSEGVMLKNDDSMSPNQWRYSSPWTKPQPEVPVTNRAANCNLHVPGPMAVNQFSPSLARRASVRPGELWHFSSLAGTSSLEPGYSHPFPARHLVPEPQPDGKREPLLSLLQQDRCLARPQESAARENGNPGQIAGSTGLLFNLPPGSVHYKKLYVSRGSASTSLPNETLSELETPGKYSLTPPNHWGHPHRYLQHL.

2 stretches are compositionally biased toward polar residues: residues 55–65 (PQELTPSSQSE) and 74–87 (SMSP…SPWT). A disordered region spans residues 55 to 93 (PQELTPSSQSEGVMLKNDDSMSPNQWRYSSPWTKPQPEV).

This sequence belongs to the vestigial family. As to quaternary structure, interacts with TEFs.

The protein resides in the nucleus. Functionally, may act as a specific coactivator for the mammalian TEFs. The sequence is that of Transcription cofactor vestigial-like protein 1 (VGLL1) from Homo sapiens (Human).